We begin with the raw amino-acid sequence, 167 residues long: NAD(P)H-quinone oxidoreductase subunit I, chloroplastic (167 aa).

4Fe-4S ferredoxin-type domains follow at residues 55–84 and 95–124; these read GRIHFEFDKCIACEVCVRVCPIDLPVVDWK and LNYSIDFGICIFCGNCVEYCPTNCLSMTEE. The [4Fe-4S] cluster site is built by Cys-64, Cys-67, Cys-70, Cys-74, Cys-104, Cys-107, Cys-110, and Cys-114.

This sequence belongs to the complex I 23 kDa subunit family. NDH is composed of at least 16 different subunits, 5 of which are encoded in the nucleus. The cofactor is [4Fe-4S] cluster.

It is found in the plastid. Its subcellular location is the chloroplast thylakoid membrane. The enzyme catalyses a plastoquinone + NADH + (n+1) H(+)(in) = a plastoquinol + NAD(+) + n H(+)(out). It carries out the reaction a plastoquinone + NADPH + (n+1) H(+)(in) = a plastoquinol + NADP(+) + n H(+)(out). Its function is as follows. NDH shuttles electrons from NAD(P)H:plastoquinone, via FMN and iron-sulfur (Fe-S) centers, to quinones in the photosynthetic chain and possibly in a chloroplast respiratory chain. The immediate electron acceptor for the enzyme in this species is believed to be plastoquinone. Couples the redox reaction to proton translocation, and thus conserves the redox energy in a proton gradient. This is NAD(P)H-quinone oxidoreductase subunit I, chloroplastic from Draba nemorosa (Woodland whitlowgrass).